The sequence spans 155 residues: MPKGSGKVIAQNKKAFHDYFIDETYEAGLVLQGTEIKAIRAGRVNLKDAFARVHNGEVWVHNMHISPYEQGNRFNHDPLRTRKLLLHKKEIQKLVGYTKETGYTLVPLKIYLKNGFAKMALGLARGKKQYDKRHDLKEKEAKREIARAFRDRQKM.

It belongs to the SmpB family.

It is found in the cytoplasm. Its function is as follows. Required for rescue of stalled ribosomes mediated by trans-translation. Binds to transfer-messenger RNA (tmRNA), required for stable association of tmRNA with ribosomes. tmRNA and SmpB together mimic tRNA shape, replacing the anticodon stem-loop with SmpB. tmRNA is encoded by the ssrA gene; the 2 termini fold to resemble tRNA(Ala) and it encodes a 'tag peptide', a short internal open reading frame. During trans-translation Ala-aminoacylated tmRNA acts like a tRNA, entering the A-site of stalled ribosomes, displacing the stalled mRNA. The ribosome then switches to translate the ORF on the tmRNA; the nascent peptide is terminated with the 'tag peptide' encoded by the tmRNA and targeted for degradation. The ribosome is freed to recommence translation, which seems to be the essential function of trans-translation. This chain is SsrA-binding protein, found in Bacillus cytotoxicus (strain DSM 22905 / CIP 110041 / 391-98 / NVH 391-98).